A 288-amino-acid polypeptide reads, in one-letter code: HTH-type transcriptional regulator YofA (288 aa).

Positions 1–58 (MESGDLKIFQAVARKGSISKAAESLHYVQSNVTNRIQQLERQLQTQLFYRTNRGMTLT) constitute an HTH lysR-type domain. A DNA-binding region (H-T-H motif) is located at residues 18–37 (ISKAAESLHYVQSNVTNRIQ).

This sequence belongs to the LysR transcriptional regulatory family.

Its subcellular location is the cytoplasm. Functionally, regulates expression of the cell division protein ftsW, and is essential for cell viability during stationary phase. The protein is HTH-type transcriptional regulator YofA (yofA) of Bacillus velezensis (strain DSM 23117 / BGSC 10A6 / LMG 26770 / FZB42) (Bacillus amyloliquefaciens subsp. plantarum).